The primary structure comprises 352 residues: Quinolinate synthase (352 aa).

The iminosuccinate site is built by H55 and S72. [4Fe-4S] cluster is bound at residue C117. Residues 143-145 and S160 each bind iminosuccinate; that span reads YVN. C204 is a binding site for [4Fe-4S] cluster. Iminosuccinate-binding positions include 230-232 and T258; that span reads HPE. C303 is a binding site for [4Fe-4S] cluster.

This sequence belongs to the quinolinate synthase family. Type 2 subfamily. [4Fe-4S] cluster serves as cofactor.

Its subcellular location is the cytoplasm. The catalysed reaction is iminosuccinate + dihydroxyacetone phosphate = quinolinate + phosphate + 2 H2O + H(+). Its pathway is cofactor biosynthesis; NAD(+) biosynthesis; quinolinate from iminoaspartate: step 1/1. Functionally, catalyzes the condensation of iminoaspartate with dihydroxyacetone phosphate to form quinolinate. The chain is Quinolinate synthase from Mycobacterium leprae (strain Br4923).